The primary structure comprises 220 residues: Ribosomal RNA small subunit methyltransferase G (220 aa).

S-adenosyl-L-methionine-binding positions include G82, L87, 137-138 (VE), and R152.

This sequence belongs to the methyltransferase superfamily. RNA methyltransferase RsmG family.

The protein resides in the cytoplasm. The enzyme catalyses guanosine(527) in 16S rRNA + S-adenosyl-L-methionine = N(7)-methylguanosine(527) in 16S rRNA + S-adenosyl-L-homocysteine. Its function is as follows. Specifically methylates the N7 position of guanine in position 527 of 16S rRNA. This chain is Ribosomal RNA small subunit methyltransferase G, found in Janthinobacterium sp. (strain Marseille) (Minibacterium massiliensis).